The primary structure comprises 155 residues: Ribosomal RNA large subunit methyltransferase H (155 aa).

Residues leucine 72, glycine 103, and 122–127 (LSPLTL) each bind S-adenosyl-L-methionine.

It belongs to the RNA methyltransferase RlmH family. In terms of assembly, homodimer.

It is found in the cytoplasm. The catalysed reaction is pseudouridine(1915) in 23S rRNA + S-adenosyl-L-methionine = N(3)-methylpseudouridine(1915) in 23S rRNA + S-adenosyl-L-homocysteine + H(+). Its function is as follows. Specifically methylates the pseudouridine at position 1915 (m3Psi1915) in 23S rRNA. In Mannheimia succiniciproducens (strain KCTC 0769BP / MBEL55E), this protein is Ribosomal RNA large subunit methyltransferase H.